A 184-amino-acid chain; its full sequence is Vacuolar protein sorting-associated protein 68 (184 aa).

Position 1 is an N-acetylmethionine (M1). At S8 the chain carries Phosphoserine. A helical membrane pass occupies residues G26–L46. N-linked (GlcNAc...) asparagine glycosylation occurs at N52. The next 3 membrane-spanning stretches (helical) occupy residues V56–V76, L115–I135, and M150–I170.

The protein belongs to the UPF0220 family.

Its subcellular location is the vacuole membrane. It localises to the mitochondrion. Its function is as follows. Involved in vacuolar protein sorting. The sequence is that of Vacuolar protein sorting-associated protein 68 (VPS68) from Saccharomyces cerevisiae (strain ATCC 204508 / S288c) (Baker's yeast).